The primary structure comprises 2472 residues: Nuclear receptor corepressor 2 (2472 aa).

Disordered regions lie at residues 1 to 20, 47 to 168, and 190 to 220; these read MSGS…PRYP, RDYT…SRLS, and ISKL…PPIE. Arg-18 carries the asymmetric dimethylarginine modification. A compositionally biased stretch (polar residues) spans 51–60; the sequence is SHLSPGSIIQ. Phosphoserine is present on residues Ser-54 and Ser-67. Composition is skewed to basic and acidic residues over residues 78-88 and 96-112; these read RSQELHLRPES and GKPD…RLEL. Residues Ser-149 and Ser-152 each carry the phosphoserine modification. Positions 165–207 form a coiled coil; that stretch reads SRLSKEELIQNMDRVDREITMVEQQISKLKKKQQQLEEEAAKP. The span at 203–212 shows a compositional bias: basic and acidic residues; sequence EAAKPPEPEK. Phosphoserine is present on Ser-215. The segment at 254 to 312 is interaction with SIN3A/B; that stretch reads LPLYNQPSDTRQYHENIKINQAMRKKLILYFKRRNHARKQWEQRFCQRYDQLMEAWEKK. The tract at residues 389–480 is deacetylase activation domain (DAD); that stretch reads MRQLAVIPPM…YLTKKNENYK (92 aa). Residues 427–478 form the SANT 1 domain; it reads QVTNMWSEQERDTFREKFMQHPKNFGLIASFLERKTVAECVLYYYLTKKNEN. 3 residues coordinate 1D-myo-inositol 1,4,5,6-tetrakisphosphate: Lys-449, Tyr-470, and Tyr-471. Disordered regions lie at residues 487–618, 665–1107, and 1173–1197; these read YRRR…EMET, HKLK…RPPI, and SATS…YRGS. Residues 492-560 adopt a coiled-coil conformation; it reads KSQQQQQQQQ…GEDNDEKEAV (69 aa). Ser-493 carries the post-translational modification Phosphoserine. Residues 494–507 are compositionally biased toward low complexity; sequence QQQQQQQQQQQQQQ. Positions 512–548 are enriched in basic and acidic residues; sequence SQEEKEEKEKEKEADKEEEKQDAENEKEELSKEKTDD. A Phosphothreonine modification is found at Thr-549. Ser-550 carries the phosphoserine modification. Residues 592-609 are compositionally biased toward polar residues; that stretch reads ATPQQSSELASMEMNESS. The region spanning 606–657 is the SANT 2 domain; sequence NESSRWTEEEMETAKKGLLEHGRNWSAIARMVGSKTVSQCKNFYFNYKKRQN. A coiled-coil region spans residues 658–682; the sequence is LDEILQQHKLKMEKERNARRKKKKT. The segment covering 709 to 718 has biased composition (acidic residues); the sequence is NEEELAEEAE. The segment covering 739–750 has biased composition (polar residues); it reads VNNSSDTESVPS. 2 positions are modified to phosphoserine: Ser-747 and Ser-750. 2 stretches are compositionally biased toward pro residues: residues 773–782 and 789–811; these read TQPPVPPPEE and EPSP…PAAP. 2 stretches are compositionally biased toward basic and acidic residues: residues 831-850 and 859-868; these read EDAK…KPEE and ESVKSDHKEE. Lys-878 carries the post-translational modification N6-acetyllysine. Residues 905–919 show a composition bias toward low complexity; the sequence is GSSSGATQDSDSSAT. Ser-938 is modified (phosphoserine). Thr-945 carries the phosphothreonine modification. Ser-955 is subject to Phosphoserine. Lys-958 bears the N6-acetyllysine mark. Positions 978 to 988 are enriched in basic and acidic residues; the sequence is KVHEPPREDTV. Over residues 989-1000 the composition is skewed to pro residues; it reads PPKPVPPVPPPT. Over residues 1090–1101 the composition is skewed to low complexity; that stretch reads LPLGLHDSARPV. Residues Lys-1181 and Lys-1209 each carry the N6-acetyllysine modification. Ser-1220 is modified (phosphoserine). 3 disordered regions span residues 1254–1277, 1345–1378, and 1410–1443; these read SVSQ…AAPK, LKRE…LKLK, and PLAP…KHDV. At Thr-1350 the chain carries Phosphothreonine. Positions 1359–1368 are enriched in basic and acidic residues; that stretch reads DLTETYKPRP. Phosphoserine is present on residues Ser-1449, Ser-1509, and Ser-1565. The disordered stretch occupies residues 1479-1578; the sequence is KSRSGTSSGA…TVPEHHPHPI (100 aa). Asymmetric dimethylarginine is present on Arg-1624. Residues 1734–1826 are disordered; sequence TAPPPFSSRH…PISPRTQDAL (93 aa). Over residues 1740 to 1753 the composition is skewed to low complexity; that stretch reads SSRHSSSPLSPGGP. A phosphoserine mark is found at Ser-1746 and Ser-1749. The segment covering 1765 to 1778 has biased composition (basic and acidic residues); that stretch reads SERERERERERDKS. Over residues 1807-1826 the composition is skewed to polar residues; the sequence is RPASHTHQHSPISPRTQDAL. Ser-1819 bears the Phosphoserine mark. Arg-1854 is subject to Omega-N-methylarginine. 3 disordered regions span residues 1857 to 1878, 1898 to 1986, and 2001 to 2078; these read RSTS…THCP, KETS…KPFS, and AGYS…LQTA. Residues 1899-1913 are compositionally biased toward basic and acidic residues; that stretch reads ETSRVARPERPRVDA. At Lys-1920 the chain carries N6-acetyllysine. Residues 1925–1938 show a composition bias toward low complexity; the sequence is EPASSPSKSSEPRS. Residue Ser-1963 is modified to Phosphoserine. Lys-1983 carries the post-translational modification N6-acetyllysine. Phosphoserine occurs at positions 2004, 2012, 2015, 2016, and 2018. The residue at position 2020 (Thr-2020) is a Phosphothreonine. The segment covering 2020–2043 has biased composition (basic and acidic residues); it reads THDKGLSKPLEELEKSHLEGELRH. Ser-2035 is subject to Phosphoserine. Positions 2064–2075 are enriched in low complexity; the sequence is LPESQPSSSPLL. The segment at 2086–2090 is required for interaction with RARA in the absence of its ligand; the sequence is RVVTL. Positions 2094–2098 match the CORNR box of ID1 motif; that stretch reads ISEVI. The disordered stretch occupies residues 2132-2226; it reads RRPPSDLYLP…GNTSQPPAFF (95 aa). Phosphoserine is present on residues Ser-2161, Ser-2181, and Ser-2215. A CORNR box of ID2 motif is present at residues 2296–2300; the sequence is LEAII. The interval 2343–2459 is disordered; that stretch reads GRSDHALTSP…HHAWDEEPKP (117 aa). The residue at position 2371 (Ser-2371) is a Phosphoserine. Residues 2439 to 2450 are compositionally biased toward low complexity; the sequence is LAAGSGPLAGPH.

Belongs to the N-CoR nuclear receptor corepressors family. In terms of assembly, forms a large corepressor complex that contains SIN3A/B and histone deacetylases HDAC1 and HDAC2. This complex associates with the thyroid (TR) and the retinoid acid receptors (RAR) in the absence of ligand, and may stabilize their interaction with TFIIB. Interacts directly with RARA in the absence of ligand; the interaction represses RARA activity. Interacts (isoform SMRT) with HDAC10. Interacts with MINT. Component of the N-Cor repressor complex, at least composed of NCOR1, NCOR2, HDAC3, TBL1X, TBL1R, CORO2A and GPS2. Interacts with CBFA2T3 and ATXN1L. Interacts with RARB; the interaction is weak and does not repress RARB transactivational activity. Interacts (via 1D-myo-inositol 1,4,5,6-tetrakisphosphate) with HDAC3; promoting the histone deacetylase activity of HDAC3. Interacts with HDAC7 and C1D. Interacts with NR4A2; this interaction increases in the absence of PITX3. Interacts with BCL6 (via the BTB domain), required for BCL6 transcriptional repressor activity on a subset of target genes. Forms ternary complexes with BCOR and BCL6 on target gene promoters but, on enhancer elements, interacts with BCL6 and HDAC3 to repress proximal gene expression. May interact with DEAF1. Interacts with RXRA. Interacts with MECP2. Interacts with ZBTB7A. Interacts with AR. Interacts with TBL1Y. Interacts with SANBR (via the BTB domain). As to expression, ubiquitous. Also widely expressed in early embryos.

It localises to the nucleus. Functionally, transcriptional corepressor that mediates the transcriptional repression activity of some nuclear receptors by promoting chromatin condensation, thus preventing access of the basal transcription. Acts by recruiting chromatin modifiers, such as histone deacetylases HDAC1, HDAC2 and HDAC3. Required to activate the histone deacetylase activity of HDAC3. Involved in the regulation BCL6-dependent of the germinal center (GC) reactions, mainly through the control of the GC B-cells proliferation and survival. Recruited by ZBTB7A to the androgen response elements/ARE on target genes, negatively regulates androgen receptor signaling and androgen-induced cell proliferation. The sequence is that of Nuclear receptor corepressor 2 (Ncor2) from Mus musculus (Mouse).